A 217-amino-acid chain; its full sequence is Pyridoxine/pyridoxamine 5'-phosphate oxidase (217 aa).

Residues 13–16 (RREY) and K71 each bind substrate. Residues 66–71 (RIVLLK), 81–82 (YT), R87, K88, and Q110 each bind FMN. Positions 128, 132, and 136 each coordinate substrate. Residues 145–146 (QS) and W190 each bind FMN. Position 196 to 198 (196 to 198 (RLH)) interacts with substrate. An FMN-binding site is contributed by R200.

It belongs to the pyridoxamine 5'-phosphate oxidase family. Homodimer. FMN serves as cofactor.

The enzyme catalyses pyridoxamine 5'-phosphate + O2 + H2O = pyridoxal 5'-phosphate + H2O2 + NH4(+). The catalysed reaction is pyridoxine 5'-phosphate + O2 = pyridoxal 5'-phosphate + H2O2. Its pathway is cofactor metabolism; pyridoxal 5'-phosphate salvage; pyridoxal 5'-phosphate from pyridoxamine 5'-phosphate: step 1/1. The protein operates within cofactor metabolism; pyridoxal 5'-phosphate salvage; pyridoxal 5'-phosphate from pyridoxine 5'-phosphate: step 1/1. Its function is as follows. Catalyzes the oxidation of either pyridoxine 5'-phosphate (PNP) or pyridoxamine 5'-phosphate (PMP) into pyridoxal 5'-phosphate (PLP). The polypeptide is Pyridoxine/pyridoxamine 5'-phosphate oxidase (Photorhabdus laumondii subsp. laumondii (strain DSM 15139 / CIP 105565 / TT01) (Photorhabdus luminescens subsp. laumondii)).